The sequence spans 373 residues: Probable neutral protease 2 homolog MCYG_05201 (373 aa).

The signal sequence occupies residues 1–19 (MQFFTALAAVGALVAPALA). Positions 20-187 (LPTQVPANQS…AHIVGTIDKR (168 aa)) are excised as a propeptide. Cystine bridges form between cysteine 195–cysteine 265 and cysteine 272–cysteine 290. Residue histidine 314 coordinates Zn(2+). Residue glutamate 315 is part of the active site. Histidine 318 and aspartate 329 together coordinate Zn(2+).

The protein belongs to the peptidase M35 family. Zn(2+) is required as a cofactor.

Its subcellular location is the secreted. It carries out the reaction Preferential cleavage of bonds with hydrophobic residues in P1'. Also 3-Asn-|-Gln-4 and 8-Gly-|-Ser-9 bonds in insulin B chain.. In terms of biological role, probable secreted metalloprotease that shows high activities on basic nuclear substrates such as histone and protamine. May be involved in virulence. This Arthroderma otae (strain ATCC MYA-4605 / CBS 113480) (Microsporum canis) protein is Probable neutral protease 2 homolog MCYG_05201.